Consider the following 188-residue polypeptide: Putative manganese efflux pump MntP (188 aa).

The next 6 helical transmembrane spans lie at 2-22, 39-59, 67-87, 107-127, 129-149, and 166-186; these read IMGN…AFAV, LITG…GFLL, ITAI…LNMI, IILS…FAFL, VDIV…SFLG, and LAGG…HLGF.

This sequence belongs to the MntP (TC 9.B.29) family.

Its subcellular location is the cell membrane. In terms of biological role, probably functions as a manganese efflux pump. The sequence is that of Putative manganese efflux pump MntP from Desulfitobacterium hafniense (strain Y51).